A 391-amino-acid chain; its full sequence is Elongation factor Tu (391 aa).

The tr-type G domain occupies 10-201 (KPHVNIGTIG…AVDAYIPTPE (192 aa)). The interval 19 to 26 (GHVDHGKT) is G1. 19–26 (GHVDHGKT) serves as a coordination point for GTP. Mg(2+) is bound at residue threonine 26. A G2 region spans residues 55–59 (GITIS). The interval 76 to 79 (DCPG) is G3. Residues 76–80 (DCPGH) and 131–134 (NKVD) contribute to the GTP site. A G4 region spans residues 131–134 (NKVD). The interval 169–171 (SAL) is G5.

The protein belongs to the TRAFAC class translation factor GTPase superfamily. Classic translation factor GTPase family. EF-Tu/EF-1A subfamily. In terms of assembly, monomer.

Its subcellular location is the cytoplasm. It carries out the reaction GTP + H2O = GDP + phosphate + H(+). GTP hydrolase that promotes the GTP-dependent binding of aminoacyl-tRNA to the A-site of ribosomes during protein biosynthesis. The chain is Elongation factor Tu from Rhizobium meliloti (strain 1021) (Ensifer meliloti).